Reading from the N-terminus, the 387-residue chain is Ferrochelatase (387 aa).

Fe cation-binding residues include H196 and E277.

It belongs to the ferrochelatase family.

It localises to the cytoplasm. The enzyme catalyses heme b + 2 H(+) = protoporphyrin IX + Fe(2+). Its pathway is porphyrin-containing compound metabolism; protoheme biosynthesis; protoheme from protoporphyrin-IX: step 1/1. Its function is as follows. Catalyzes the ferrous insertion into protoporphyrin IX. The sequence is that of Ferrochelatase from Synechococcus elongatus (strain ATCC 33912 / PCC 7942 / FACHB-805) (Anacystis nidulans R2).